A 383-amino-acid polypeptide reads, in one-letter code: Queuine tRNA-ribosyltransferase (383 aa).

The active-site Proton acceptor is the Asp89. Substrate-binding positions include Asp89–Phe93, Asp143, Gln187, and Gly214. Residues Gly245 to Asp251 form an RNA binding region. The active-site Nucleophile is Asp264. The segment at Thr269–Arg273 is RNA binding; important for wobble base 34 recognition. Residues Cys302, Cys304, Cys307, and His333 each contribute to the Zn(2+) site.

The protein belongs to the queuine tRNA-ribosyltransferase family. As to quaternary structure, homodimer. Within each dimer, one monomer is responsible for RNA recognition and catalysis, while the other monomer binds to the replacement base PreQ1. It depends on Zn(2+) as a cofactor.

It catalyses the reaction 7-aminomethyl-7-carbaguanine + guanosine(34) in tRNA = 7-aminomethyl-7-carbaguanosine(34) in tRNA + guanine. Its pathway is tRNA modification; tRNA-queuosine biosynthesis. In terms of biological role, catalyzes the base-exchange of a guanine (G) residue with the queuine precursor 7-aminomethyl-7-deazaguanine (PreQ1) at position 34 (anticodon wobble position) in tRNAs with GU(N) anticodons (tRNA-Asp, -Asn, -His and -Tyr). Catalysis occurs through a double-displacement mechanism. The nucleophile active site attacks the C1' of nucleotide 34 to detach the guanine base from the RNA, forming a covalent enzyme-RNA intermediate. The proton acceptor active site deprotonates the incoming PreQ1, allowing a nucleophilic attack on the C1' of the ribose to form the product. After dissociation, two additional enzymatic reactions on the tRNA convert PreQ1 to queuine (Q), resulting in the hypermodified nucleoside queuosine (7-(((4,5-cis-dihydroxy-2-cyclopenten-1-yl)amino)methyl)-7-deazaguanosine). This Thermodesulfovibrio yellowstonii (strain ATCC 51303 / DSM 11347 / YP87) protein is Queuine tRNA-ribosyltransferase.